Here is a 182-residue protein sequence, read N- to C-terminus: MSEPIQNENVESNVADAADIAAATAATEEFTNTIGDAIATASEEETIEAAPVVLDGPIQTVGRRKRAIVRVRLVAGSGEFKCNGRTLEEYFPNKLHQQLIKAPLVLLDRENQFDIVATLKGGGPTGQAGAFRLAIARALNAYNPAERGELKKAGFLTRDARAVERKKAGLHKARRAPQYSKR.

This sequence belongs to the universal ribosomal protein uS9 family.

The protein is Small ribosomal subunit protein uS9 of Corynebacterium glutamicum (strain R).